Reading from the N-terminus, the 333-residue chain is Ketol-acid reductoisomerase (NADP(+)) (333 aa).

One can recognise a KARI N-terminal Rossmann domain in the interval 2 to 182 (AELFYDADAD…GGTRAGVIKT (181 aa)). NADP(+) is bound by residues 25–28 (YGSQ), Ser-51, Ser-53, and 83–86 (DPIQ). Residue His-108 is part of the active site. Gly-134 provides a ligand contact to NADP(+). A KARI C-terminal knotted domain is found at 183–328 (TFTEETETDL…KELRKLMSWV (146 aa)). Mg(2+)-binding residues include Asp-191, Glu-195, Glu-227, and Glu-231. Residue Ser-252 participates in substrate binding.

Belongs to the ketol-acid reductoisomerase family. Requires Mg(2+) as cofactor.

It catalyses the reaction (2R)-2,3-dihydroxy-3-methylbutanoate + NADP(+) = (2S)-2-acetolactate + NADPH + H(+). The catalysed reaction is (2R,3R)-2,3-dihydroxy-3-methylpentanoate + NADP(+) = (S)-2-ethyl-2-hydroxy-3-oxobutanoate + NADPH + H(+). Its pathway is amino-acid biosynthesis; L-isoleucine biosynthesis; L-isoleucine from 2-oxobutanoate: step 2/4. It participates in amino-acid biosynthesis; L-valine biosynthesis; L-valine from pyruvate: step 2/4. Functionally, involved in the biosynthesis of branched-chain amino acids (BCAA). Catalyzes an alkyl-migration followed by a ketol-acid reduction of (S)-2-acetolactate (S2AL) to yield (R)-2,3-dihydroxy-isovalerate. In the isomerase reaction, S2AL is rearranged via a Mg-dependent methyl migration to produce 3-hydroxy-3-methyl-2-ketobutyrate (HMKB). In the reductase reaction, this 2-ketoacid undergoes a metal-dependent reduction by NADPH to yield (R)-2,3-dihydroxy-isovalerate. The polypeptide is Ketol-acid reductoisomerase (NADP(+)) (Streptomyces avermitilis (strain ATCC 31267 / DSM 46492 / JCM 5070 / NBRC 14893 / NCIMB 12804 / NRRL 8165 / MA-4680)).